The chain runs to 376 residues: Chaperone protein DnaJ (376 aa).

Residues 5 to 69 (DYYEVLGISK…QKRAQYDQYG (65 aa)) enclose the J domain. A CR-type zinc finger spans residues 133–215 (GKDAEIEIPR…CHGKGRVTKT (83 aa)). Residues Cys-146, Cys-149, Cys-163, Cys-166, Cys-189, Cys-192, Cys-203, and Cys-206 each contribute to the Zn(2+) site. 4 CXXCXGXG motif repeats span residues 146 to 153 (CDTCHGSG), 163 to 170 (CSHCGGKG), 189 to 196 (CQYCNGTG), and 203 to 210 (CSTCHGKG).

The protein belongs to the DnaJ family. As to quaternary structure, homodimer. The cofactor is Zn(2+).

It localises to the cytoplasm. Functionally, participates actively in the response to hyperosmotic and heat shock by preventing the aggregation of stress-denatured proteins and by disaggregating proteins, also in an autonomous, DnaK-independent fashion. Unfolded proteins bind initially to DnaJ; upon interaction with the DnaJ-bound protein, DnaK hydrolyzes its bound ATP, resulting in the formation of a stable complex. GrpE releases ADP from DnaK; ATP binding to DnaK triggers the release of the substrate protein, thus completing the reaction cycle. Several rounds of ATP-dependent interactions between DnaJ, DnaK and GrpE are required for fully efficient folding. Also involved, together with DnaK and GrpE, in the DNA replication of plasmids through activation of initiation proteins. This Listeria welshimeri serovar 6b (strain ATCC 35897 / DSM 20650 / CCUG 15529 / CIP 8149 / NCTC 11857 / SLCC 5334 / V8) protein is Chaperone protein DnaJ.